We begin with the raw amino-acid sequence, 397 residues long: Phosphoglycerate kinase (397 aa).

Substrate contacts are provided by residues 21 to 23 (DFN), R37, 60 to 63 (HLGR), R119, and R152. Residues K203, G294, E325, and 354 to 357 (GGDS) contribute to the ATP site.

The protein belongs to the phosphoglycerate kinase family. Monomer.

Its subcellular location is the cytoplasm. The enzyme catalyses (2R)-3-phosphoglycerate + ATP = (2R)-3-phospho-glyceroyl phosphate + ADP. It functions in the pathway carbohydrate degradation; glycolysis; pyruvate from D-glyceraldehyde 3-phosphate: step 2/5. In Chlorobium limicola (strain DSM 245 / NBRC 103803 / 6330), this protein is Phosphoglycerate kinase.